The following is a 196-amino-acid chain: Rho-related protein racA (196 aa).

Residues Ala13, Gly15, Lys16, Thr17, Cys18, Tyr32, Thr35, Gly60, Lys116, Asp118, and Ala159 each coordinate GTP. Thr17 lines the Mg(2+) pocket. 2 short sequence motifs (switch) span residues 26–37 (NAFPNEYIPTVF) and 57–75 (DTAG…YPQT). Thr35 serves as a coordination point for Mg(2+). Cysteine methyl ester is present on Cys193. A lipid anchor (S-geranylgeranyl cysteine) is attached at Cys193. The propeptide at 194–196 (LLF) is removed in mature form.

The protein belongs to the small GTPase superfamily. Rho family. As to quaternary structure, interacts (GTP-bound form) with PAK2 (via CRIB domain). Mg(2+) is required as a cofactor.

The protein localises to the cell membrane. The protein resides in the cytoplasm. It is found in the cytoskeleton. The enzyme catalyses GTP + H2O = GDP + phosphate + H(+). Its activity is regulated as follows. Regulated by guanine nucleotide exchange factors (GEFs) which promote the exchange of bound GDP for free GTP, GTPase activating proteins (GAPs) which increase the GTP hydrolysis activity, and GDP dissociation inhibitors which inhibit the dissociation of the nucleotide from the GTPase. In terms of biological role, small GTPase which cycles between active GTP-bound and inactive GDP-bound states. Involved in cytoskeleton remodeling. Plays a role in phagocytosis of bacteria and host erythrocytes. Involved in capping of surface receptors. May be involved in cytokinesis. The polypeptide is Rho-related protein racA (Entamoeba histolytica (strain ATCC 30459 / HM-1:IMSS / ABRM)).